The sequence spans 294 residues: MSRLVEDFFAFLHVERGMSSHTLDAYRRDIGALIAWGGQQAVGEVVALDRAQLQAFVSAEHRRGLSAKSLQRRLSACRGFYTWLVKRGHIAVNPAAGLRAPKALRKLPRILDADEAVSFVQIPTDTPLGLRDRALLELFYSSGLRLSELCGLRWDGLDLDAGLVSVLGKGSRQRVVPVGSYALSALREWCASSGGGAQQPVFPGRYGGPISARAVQVRIKQLAQRQGMAKHVHPHMLRHSFASHLLESSGDLRGVQELLGHADITTTQIYTHLDFQYLSKVYDAAHPRARRKAR.

Residues 1–85 (MSRLVEDFFA…ACRGFYTWLV (85 aa)) enclose the Core-binding (CB) domain. The 178-residue stretch at 106–283 (KLPRILDADE…DFQYLSKVYD (178 aa)) folds into the Tyr recombinase domain. Active-site residues include Arg-145, Lys-169, His-235, Arg-238, and His-261. Tyr-270 acts as the O-(3'-phospho-DNA)-tyrosine intermediate in catalysis.

The protein belongs to the 'phage' integrase family. XerC subfamily. Forms a cyclic heterotetrameric complex composed of two molecules of XerC and two molecules of XerD.

Its subcellular location is the cytoplasm. In terms of biological role, site-specific tyrosine recombinase, which acts by catalyzing the cutting and rejoining of the recombining DNA molecules. The XerC-XerD complex is essential to convert dimers of the bacterial chromosome into monomers to permit their segregation at cell division. It also contributes to the segregational stability of plasmids. In Xylella fastidiosa (strain M23), this protein is Tyrosine recombinase XerC.